A 238-amino-acid polypeptide reads, in one-letter code: Probable transcriptional regulatory protein Sde_1551 (238 aa).

This sequence belongs to the TACO1 family.

It localises to the cytoplasm. This is Probable transcriptional regulatory protein Sde_1551 from Saccharophagus degradans (strain 2-40 / ATCC 43961 / DSM 17024).